We begin with the raw amino-acid sequence, 225 residues long: MNSIHSANSNTVSTSEINTSQIPTDSLESIRNRLNQVHLSLRKLSDQINHHNRHPNKVKLPNYAQFQNQFQVLLTQLHTITSDLENNDELLKNTNVYPLPSFPTTQQEGLITTLLRKKPLPEVDEWIESAIDKRKNEYVNVQKDDEFAQWCLTKIEELREDFQFYGFNSVEELKYLDSEDEKKETEENKKIENQKYEEELKITAGGKSGLHPNRVLKFMCQGVLT.

Positions 1–24 (MNSIHSANSNTVSTSEINTSQIPT) are disordered. A coiled-coil region spans residues 170–204 (VEELKYLDSEDEKKETEENKKIENQKYEEELKITA).

Belongs to the Mediator complex subunit 8 family. As to quaternary structure, component of the Mediator complex.

The protein resides in the nucleus. Functionally, component of the Mediator complex, a coactivator involved in the regulated transcription of nearly all RNA polymerase II-dependent genes. Mediator functions as a bridge to convey information from gene-specific regulatory proteins to the basal RNA polymerase II transcription machinery. Mediator is recruited to promoters by direct interactions with regulatory proteins and serves as a scaffold for the assembly of a functional preinitiation complex with RNA polymerase II and the general transcription factors. The polypeptide is Mediator of RNA polymerase II transcription subunit 8 (MED8) (Debaryomyces hansenii (strain ATCC 36239 / CBS 767 / BCRC 21394 / JCM 1990 / NBRC 0083 / IGC 2968) (Yeast)).